We begin with the raw amino-acid sequence, 387 residues long: Short-chain dehydrogenase/reductase family 42E member 1 (387 aa).

Residue Tyr-149 is the Proton acceptor of the active site. Position 153 (Lys-153) interacts with NAD(+). The next 2 membrane-spanning stretches (helical) occupy residues 279-299 (LPIS…FVVG) and 365-385 (ILDV…LPVV).

The protein belongs to the 3-beta-HSD family.

The protein resides in the membrane. The chain is Short-chain dehydrogenase/reductase family 42E member 1 (sdr42e1) from Danio rerio (Zebrafish).